We begin with the raw amino-acid sequence, 158 residues long: Phosphopantetheine adenylyltransferase (158 aa).

Thr10 is a substrate binding site. Residues 10-11 and His18 each bind ATP; that span reads TF. Residues Lys42, Leu74, and Arg88 each coordinate substrate. Residues 89-91, Glu99, and 124-130 contribute to the ATP site; these read GLR and NSFISST.

The protein belongs to the bacterial CoaD family. As to quaternary structure, homohexamer. Mg(2+) serves as cofactor.

It localises to the cytoplasm. It carries out the reaction (R)-4'-phosphopantetheine + ATP + H(+) = 3'-dephospho-CoA + diphosphate. Its pathway is cofactor biosynthesis; coenzyme A biosynthesis; CoA from (R)-pantothenate: step 4/5. Its function is as follows. Reversibly transfers an adenylyl group from ATP to 4'-phosphopantetheine, yielding dephospho-CoA (dPCoA) and pyrophosphate. This chain is Phosphopantetheine adenylyltransferase, found in Shewanella sediminis (strain HAW-EB3).